The primary structure comprises 561 residues: Probable xyloglucan galactosyltransferase GT20 (561 aa).

Topologically, residues 1-31 are cytoplasmic; it reads MVSKRKSRTSKTIEDSCIHLCSVFFRFLYYT. Residues 32 to 52 traverse the membrane as a helical; Signal-anchor for type II membrane protein segment; it reads LPALFLFFFLLYLCLSFTTGI. Residues 53 to 561 are Lumenal-facing; the sequence is SYNNFHMCIF…LLKKINRSVV (509 aa). Residues Asn-87, Asn-253, Asn-277, Asn-418, Asn-421, and Asn-557 are each glycosylated (N-linked (GlcNAc...) asparagine).

It belongs to the glycosyltransferase 47 family. Expressed in hydathodes.

The protein localises to the golgi apparatus membrane. Functions in xyloglucan synthesis by adding side chains to the xylosylated glucan backbone. Involved in the galactosylation of hemicellulose xyloglucan. This chain is Probable xyloglucan galactosyltransferase GT20, found in Arabidopsis thaliana (Mouse-ear cress).